A 327-amino-acid chain; its full sequence is DNA-directed RNA polymerase subunit alpha (327 aa).

Residues 1 to 233 are alpha N-terminal domain (alpha-NTD); it reads MQNSASEFLK…DQLSIFADLQ (233 aa). The segment at 247 to 327 is alpha C-terminal domain (alpha-CTD); that stretch reads VDPILLRPVD…NWPPAGLEKP (81 aa).

The protein belongs to the RNA polymerase alpha chain family. Homodimer. The RNAP catalytic core consists of 2 alpha, 1 beta, 1 beta' and 1 omega subunit. When a sigma factor is associated with the core the holoenzyme is formed, which can initiate transcription.

The catalysed reaction is RNA(n) + a ribonucleoside 5'-triphosphate = RNA(n+1) + diphosphate. DNA-dependent RNA polymerase catalyzes the transcription of DNA into RNA using the four ribonucleoside triphosphates as substrates. In Laribacter hongkongensis (strain HLHK9), this protein is DNA-directed RNA polymerase subunit alpha.